The sequence spans 139 residues: Lymphocyte antigen 6H (139 aa).

The first 25 residues, methionine 1 to glycine 25, serve as a signal peptide directing secretion. Residues leucine 26–serine 113 enclose the UPAR/Ly6 domain. 5 disulfides stabilise this stretch: cysteine 28–cysteine 51, cysteine 31–cysteine 39, cysteine 44–cysteine 72, cysteine 76–cysteine 103, and cysteine 104–cysteine 109. Asparagine 35 is a glycosylation site (N-linked (GlcNAc...) asparagine). Asparagine 110 is lipidated: GPI-anchor amidated asparagine. Positions glycine 111–proline 139 are cleaved as a propeptide — removed in mature form.

In terms of assembly, interacts with CHRNA4 and CHRNA7. In terms of tissue distribution, strongly expressed in brain, also found in lower levels in eye and reproductive tissues.

The protein localises to the cell membrane. Functionally, believed to act as modulator of nicotinic acetylcholine receptors (nAChRs) activity. In vitro inhibits alpha-3:beta-4-containing nAChRs maximum response. In vitro inhibits alpha-3:beta-4-containing nAChRs maximum response. May play a role in the intracellular trafficking of alpha-7-containing nAChRs and may inhibit their expression at the cell surface. Seems to inhibit alpha-7/CHRNA7 signaling in hippocampal neurons. This Mus musculus (Mouse) protein is Lymphocyte antigen 6H (Ly6h).